The following is a 779-amino-acid chain: Nucleolar complex protein 3 homolog (779 aa).

Disordered stretches follow at residues 1–20 and 100–189; these read MGFA…TNKT and NAKR…SHLS. Acidic residues predominate over residues 114-124; sequence DSDEDEDEDDV. The segment covering 136-160 has biased composition (basic and acidic residues); that stretch reads EEGHEELLPIKLKDGTLIRPTREKE. A compositionally biased stretch (acidic residues) spans 161–178; the sequence is VEEQEEEEKSDIDEGEED. A coiled-coil region spans residues 434–474; the sequence is AKKYQIKKERASKTAKKYKKQLARLEADLLEVEAEESLTKK.

The protein belongs to the CBF/MAK21 family.

It localises to the nucleus. The protein resides in the nucleolus. The protein is Nucleolar complex protein 3 homolog of Caenorhabditis briggsae.